Reading from the N-terminus, the 389-residue chain is RHOMBOID-like protein 1 (389 aa).

7 helical membrane passes run 56–76, 136–156, 163–183, 191–211, 221–241, 244–264, and 295–315; these read PWLV…SMFI, IWLH…IFIG, FGFV…SLLS, ISVG…SELL, FAAL…GILP, DNFA…VFLI, and VLWI…LVVL. The active-site Nucleophile is the serine 196. Histidine 248 acts as the Charge relay system in catalysis.

Belongs to the peptidase S54 family. Expressed in roots, seedlings, leaves, stems and flowers.

The protein resides in the golgi apparatus membrane. The enzyme catalyses Cleaves type-1 transmembrane domains using a catalytic dyad composed of serine and histidine that are contributed by different transmembrane domains.. Functionally, probable rhomboid-type serine protease that catalyzes intramembrane proteolysis. Unable to cleave the Drosophila protein Spitz. In Arabidopsis thaliana (Mouse-ear cress), this protein is RHOMBOID-like protein 1.